The sequence spans 284 residues: Bifunctional protein FolD 2 (284 aa).

NADP(+) is bound by residues 164 to 166 (GRG), S189, and I230.

This sequence belongs to the tetrahydrofolate dehydrogenase/cyclohydrolase family. Homodimer.

The catalysed reaction is (6R)-5,10-methylene-5,6,7,8-tetrahydrofolate + NADP(+) = (6R)-5,10-methenyltetrahydrofolate + NADPH. The enzyme catalyses (6R)-5,10-methenyltetrahydrofolate + H2O = (6R)-10-formyltetrahydrofolate + H(+). It functions in the pathway one-carbon metabolism; tetrahydrofolate interconversion. Functionally, catalyzes the oxidation of 5,10-methylenetetrahydrofolate to 5,10-methenyltetrahydrofolate and then the hydrolysis of 5,10-methenyltetrahydrofolate to 10-formyltetrahydrofolate. The chain is Bifunctional protein FolD 2 from Desulfitobacterium hafniense (strain Y51).